The sequence spans 652 residues: ATP-dependent zinc metalloprotease FtsH 1 (652 aa).

Residues 1 to 9 (MSDNKWLRN) are Cytoplasmic-facing. Residues 10 to 30 (GFVWMILIIAAIAVWVTFVQG) form a helical membrane-spanning segment. The Extracellular portion of the chain corresponds to 31-110 (GRGGATITTQ…QTHRASQWGN (80 aa)). Residues 111–131 (VLGTLTFLLPTLFLIGVIIFM) traverse the membrane as a helical segment. Residues 132 to 652 (MRQAQGTNNQ…VPHIKPQPAS (521 aa)) are Cytoplasmic-facing. 203–210 (GPPGTGKT) contacts ATP. Histidine 425 contacts Zn(2+). Glutamate 426 is a catalytic residue. Zn(2+) contacts are provided by histidine 429 and aspartate 501. Residues 623–652 (IATPETARPDSPSEARPAAPVPHIKPQPAS) are disordered. A compositionally biased stretch (pro residues) spans 641 to 652 (APVPHIKPQPAS).

In the central section; belongs to the AAA ATPase family. It in the C-terminal section; belongs to the peptidase M41 family. In terms of assembly, homohexamer. Requires Zn(2+) as cofactor.

It localises to the cell membrane. Functionally, acts as a processive, ATP-dependent zinc metallopeptidase for both cytoplasmic and membrane proteins. Plays a role in the quality control of integral membrane proteins. This chain is ATP-dependent zinc metalloprotease FtsH 1, found in Thermomicrobium roseum (strain ATCC 27502 / DSM 5159 / P-2).